A 132-amino-acid polypeptide reads, in one-letter code: L-ectoine synthase (132 aa).

Belongs to the ectoine synthase family.

It catalyses the reaction (2S)-4-acetamido-2-aminobutanoate = L-ectoine + H2O. It functions in the pathway amine and polyamine biosynthesis; ectoine biosynthesis; L-ectoine from L-aspartate 4-semialdehyde: step 3/3. Functionally, catalyzes the circularization of gamma-N-acetyl-alpha,gamma-diaminobutyric acid (ADABA) to ectoine (1,4,5,6-tetrahydro-2-methyl-4-pyrimidine carboxylic acid), which is an excellent osmoprotectant. This chain is L-ectoine synthase, found in Alkalilimnicola ehrlichii (strain ATCC BAA-1101 / DSM 17681 / MLHE-1).